The chain runs to 97 residues: UPF0235 protein cbdbA1230 (97 aa).

The protein belongs to the UPF0235 family.

This Dehalococcoides mccartyi (strain CBDB1) protein is UPF0235 protein cbdbA1230.